We begin with the raw amino-acid sequence, 185 residues long: Ribosome-recycling factor (185 aa).

Belongs to the RRF family.

It is found in the cytoplasm. Responsible for the release of ribosomes from messenger RNA at the termination of protein biosynthesis. May increase the efficiency of translation by recycling ribosomes from one round of translation to another. This Campylobacter fetus subsp. fetus (strain 82-40) protein is Ribosome-recycling factor.